The primary structure comprises 390 residues: MAAGRGERAGQSAEGPKQYRLIGAEAVLARTLRAFTDCPLIGTIAVVIHPDDHALYRRAVPEKHENVILVTGGPTRQESTRLGLLALKDEAPQYVLIHDGVRPFIGQDLLERIIANLTPDNGVLPALAVPDTLKRAAADGMVETTISRTGLFAAQTPQAFPYAPILDAHEKAFAINRTDFTDDAAIAEWQEIAVRIIEGSADNTKLTWAKDIEMADKRLRQDHAVFPDIRTGNGYDVHSFEPGDHVTLCGVKIPHEAKLNGHSDADVALHALTDALLATRGAGDIGTHFPPSDSQWKGAASRIFIEHAAKIVREAGGRIANVDVTLISEAPKIGPHRAAMTQALCDMLGIAADRVSIKATTNEKLGFVGRREGIAAIATATVIYPGEVPE.

The interval 1-229 (MAAGRGERAG…RQDHAVFPDI (229 aa)) is 2-C-methyl-D-erythritol 4-phosphate cytidylyltransferase. The interval 230–390 (RTGNGYDVHS…TVIYPGEVPE (161 aa)) is 2-C-methyl-D-erythritol 2,4-cyclodiphosphate synthase. Residues Asp236 and His238 each contribute to the a divalent metal cation site. Residues 236 to 238 (DVH) and 262 to 263 (HS) contribute to the 4-CDP-2-C-methyl-D-erythritol 2-phosphate site. His270 provides a ligand contact to a divalent metal cation. 4-CDP-2-C-methyl-D-erythritol 2-phosphate contacts are provided by residues 284 to 286 (DIG), 360 to 363 (TTNE), Phe367, and Arg370.

In the N-terminal section; belongs to the IspD/TarI cytidylyltransferase family. IspD subfamily. The protein in the C-terminal section; belongs to the IspF family. It depends on a divalent metal cation as a cofactor.

The enzyme catalyses 2-C-methyl-D-erythritol 4-phosphate + CTP + H(+) = 4-CDP-2-C-methyl-D-erythritol + diphosphate. It catalyses the reaction 4-CDP-2-C-methyl-D-erythritol 2-phosphate = 2-C-methyl-D-erythritol 2,4-cyclic diphosphate + CMP. The protein operates within isoprenoid biosynthesis; isopentenyl diphosphate biosynthesis via DXP pathway; isopentenyl diphosphate from 1-deoxy-D-xylulose 5-phosphate: step 2/6. It participates in isoprenoid biosynthesis; isopentenyl diphosphate biosynthesis via DXP pathway; isopentenyl diphosphate from 1-deoxy-D-xylulose 5-phosphate: step 4/6. Its function is as follows. Bifunctional enzyme that catalyzes the formation of 4-diphosphocytidyl-2-C-methyl-D-erythritol from CTP and 2-C-methyl-D-erythritol 4-phosphate (MEP) (IspD), and catalyzes the conversion of 4-diphosphocytidyl-2-C-methyl-D-erythritol 2-phosphate (CDP-ME2P) to 2-C-methyl-D-erythritol 2,4-cyclodiphosphate (ME-CPP) with a corresponding release of cytidine 5-monophosphate (CMP) (IspF). This Brucella suis biovar 1 (strain 1330) protein is Bifunctional enzyme IspD/IspF.